Reading from the N-terminus, the 251-residue chain is Phosphate import ATP-binding protein PstB (251 aa).

In terms of domain architecture, ABC transporter spans 5–246 (IKIRGVNFFY…PRDKRTEDYI (242 aa)). Residue 37 to 44 (GPSGCGKS) participates in ATP binding.

Belongs to the ABC transporter superfamily. Phosphate importer (TC 3.A.1.7) family. In terms of assembly, the complex is composed of two ATP-binding proteins (PstB), two transmembrane proteins (PstC and PstA) and a solute-binding protein (PstS).

It is found in the cell membrane. It carries out the reaction phosphate(out) + ATP + H2O = ADP + 2 phosphate(in) + H(+). Its function is as follows. Part of the ABC transporter complex PstSACB involved in phosphate import. Responsible for energy coupling to the transport system. The sequence is that of Phosphate import ATP-binding protein PstB from Dehalococcoides mccartyi (strain CBDB1).